A 100-amino-acid polypeptide reads, in one-letter code: MITKEEVKKIAKLARLKFEEDKVEEFSSRLSSIMDMIDILNEIDCTDVKPLTSVCDMQARMRPDEVTSKDHSNELFDNVQGASQQLAKEVKYFITPKVVE.

It belongs to the GatC family. Heterotrimer of A, B and C subunits.

The catalysed reaction is L-glutamyl-tRNA(Gln) + L-glutamine + ATP + H2O = L-glutaminyl-tRNA(Gln) + L-glutamate + ADP + phosphate + H(+). The enzyme catalyses L-aspartyl-tRNA(Asn) + L-glutamine + ATP + H2O = L-asparaginyl-tRNA(Asn) + L-glutamate + ADP + phosphate + 2 H(+). Functionally, allows the formation of correctly charged Asn-tRNA(Asn) or Gln-tRNA(Gln) through the transamidation of misacylated Asp-tRNA(Asn) or Glu-tRNA(Gln) in organisms which lack either or both of asparaginyl-tRNA or glutaminyl-tRNA synthetases. The reaction takes place in the presence of glutamine and ATP through an activated phospho-Asp-tRNA(Asn) or phospho-Glu-tRNA(Gln). The protein is Aspartyl/glutamyl-tRNA(Asn/Gln) amidotransferase subunit C of Rickettsia bellii (strain RML369-C).